The sequence spans 92 residues: Small ribosomal subunit protein uS19 (92 aa).

This sequence belongs to the universal ribosomal protein uS19 family.

Functionally, protein S19 forms a complex with S13 that binds strongly to the 16S ribosomal RNA. The polypeptide is Small ribosomal subunit protein uS19 (Enterococcus faecalis (strain ATCC 700802 / V583)).